A 138-amino-acid polypeptide reads, in one-letter code: ATP synthase epsilon chain, chloroplastic (138 aa).

Belongs to the ATPase epsilon chain family. As to quaternary structure, F-type ATPases have 2 components, CF(1) - the catalytic core - and CF(0) - the membrane proton channel. CF(1) has five subunits: alpha(3), beta(3), gamma(1), delta(1), epsilon(1). CF(0) has three main subunits: a, b and c.

The protein localises to the plastid. Its subcellular location is the chloroplast thylakoid membrane. Functionally, produces ATP from ADP in the presence of a proton gradient across the membrane. The sequence is that of ATP synthase epsilon chain, chloroplastic from Galdieria sulphuraria (Red alga).